Reading from the N-terminus, the 454-residue chain is Bifunctional protein GlmU (454 aa).

The tract at residues 1 to 228 (MTLPLHVVIL…PQDVEGANDP (228 aa)) is pyrophosphorylase. UDP-N-acetyl-alpha-D-glucosamine contacts are provided by residues 10-13 (LAAG), Lys24, Gln76, 81-82 (GT), 103-105 (YGD), Gly138, Glu153, Asn168, and Asn226. Residue Asp105 participates in Mg(2+) binding. Asn226 is a Mg(2+) binding site. Residues 229–249 (WQLAQLERAWQLRAARALCLQ) form a linker region. Residues 250–454 (GVRMADPARV…IEGWERPKKK (205 aa)) are N-acetyltransferase. UDP-N-acetyl-alpha-D-glucosamine is bound by residues Arg332 and Lys350. Catalysis depends on His362, which acts as the Proton acceptor. UDP-N-acetyl-alpha-D-glucosamine is bound by residues Tyr365 and Asn376. Acetyl-CoA is bound by residues Ala379, 385 to 386 (NY), Ser404, Ala422, and Arg439.

In the N-terminal section; belongs to the N-acetylglucosamine-1-phosphate uridyltransferase family. It in the C-terminal section; belongs to the transferase hexapeptide repeat family. In terms of assembly, homotrimer. The cofactor is Mg(2+).

Its subcellular location is the cytoplasm. It catalyses the reaction alpha-D-glucosamine 1-phosphate + acetyl-CoA = N-acetyl-alpha-D-glucosamine 1-phosphate + CoA + H(+). It carries out the reaction N-acetyl-alpha-D-glucosamine 1-phosphate + UTP + H(+) = UDP-N-acetyl-alpha-D-glucosamine + diphosphate. It participates in nucleotide-sugar biosynthesis; UDP-N-acetyl-alpha-D-glucosamine biosynthesis; N-acetyl-alpha-D-glucosamine 1-phosphate from alpha-D-glucosamine 6-phosphate (route II): step 2/2. It functions in the pathway nucleotide-sugar biosynthesis; UDP-N-acetyl-alpha-D-glucosamine biosynthesis; UDP-N-acetyl-alpha-D-glucosamine from N-acetyl-alpha-D-glucosamine 1-phosphate: step 1/1. Its pathway is bacterial outer membrane biogenesis; LPS lipid A biosynthesis. Functionally, catalyzes the last two sequential reactions in the de novo biosynthetic pathway for UDP-N-acetylglucosamine (UDP-GlcNAc). The C-terminal domain catalyzes the transfer of acetyl group from acetyl coenzyme A to glucosamine-1-phosphate (GlcN-1-P) to produce N-acetylglucosamine-1-phosphate (GlcNAc-1-P), which is converted into UDP-GlcNAc by the transfer of uridine 5-monophosphate (from uridine 5-triphosphate), a reaction catalyzed by the N-terminal domain. This is Bifunctional protein GlmU from Xanthomonas campestris pv. campestris (strain 8004).